We begin with the raw amino-acid sequence, 275 residues long: Formamidopyrimidine-DNA glycosylase (275 aa).

Pro2 serves as the catalytic Schiff-base intermediate with DNA. Catalysis depends on Glu3, which acts as the Proton donor. The active-site Proton donor; for beta-elimination activity is the Lys58. His93, Arg111, and Arg156 together coordinate DNA. The FPG-type zinc-finger motif lies at 241–275 (FVYDRAGEPCRVCGTPIRQIVQGQRSTYFCPTCQR). The active-site Proton donor; for delta-elimination activity is the Arg265.

The protein belongs to the FPG family. As to quaternary structure, monomer. Zn(2+) is required as a cofactor.

The enzyme catalyses Hydrolysis of DNA containing ring-opened 7-methylguanine residues, releasing 2,6-diamino-4-hydroxy-5-(N-methyl)formamidopyrimidine.. The catalysed reaction is 2'-deoxyribonucleotide-(2'-deoxyribose 5'-phosphate)-2'-deoxyribonucleotide-DNA = a 3'-end 2'-deoxyribonucleotide-(2,3-dehydro-2,3-deoxyribose 5'-phosphate)-DNA + a 5'-end 5'-phospho-2'-deoxyribonucleoside-DNA + H(+). Functionally, involved in base excision repair of DNA damaged by oxidation or by mutagenic agents. Acts as a DNA glycosylase that recognizes and removes damaged bases. Has a preference for oxidized purines, such as 7,8-dihydro-8-oxoguanine (8-oxoG). Has AP (apurinic/apyrimidinic) lyase activity and introduces nicks in the DNA strand. Cleaves the DNA backbone by beta-delta elimination to generate a single-strand break at the site of the removed base with both 3'- and 5'-phosphates. The protein is Formamidopyrimidine-DNA glycosylase of Burkholderia multivorans (strain ATCC 17616 / 249).